Here is a 457-residue protein sequence, read N- to C-terminus: MYQPFQHLDSDQVASWQSPEMLMNKSVSRESQRRKELVAGQIVTGSLLLLLIFWTLFGNILVCTAVMRFRHLRSRVTNIFIVSLAVSDLLVALLVMPWKAVAEVAGHWPFGAFCDIWVAFDIMCSTASILNLCVISVDRYWAISSPFRYERKMTQRVALLMISTAWALSVLISFIPVQLSWHKSETEDHLLSNHSTGNCDSSLNRTYAISSSLISFYIPVAIMIVTYTRIYRIAQIQIKRISTLERAAEHAQSCRSNRVDSCSRHHQTSLRTSIKKETKVLKTLSIIMGVFVCCWLPFFILNCMVPFCDRSPGHPQAGLPCVSETTFDIFVWFGWANSSLNPIIYAFNADFRKVFSSLLGCGHWCSTTPVETVNISNELISYNQDTLFHKDIVTAYVNMIPNVVDCIDDNEDAFDHMSQISQTSANNELATDSMCELDSEVDISLHKITPSMSNGIH.

The Extracellular segment spans residues methionine 1–glutamine 41. An N-linked (GlcNAc...) asparagine glycan is attached at asparagine 24. The chain crosses the membrane as a helical span at residues isoleucine 42–methionine 67. Residues arginine 68–asparagine 78 lie on the Cytoplasmic side of the membrane. Residues isoleucine 79–alanine 105 form a helical membrane-spanning segment. Residues glycine 106–cysteine 114 lie on the Extracellular side of the membrane. Cysteine 114 and cysteine 199 form a disulfide bridge. The helical transmembrane segment at aspartate 115–valine 137 threads the bilayer. Topologically, residues aspartate 138–arginine 156 are cytoplasmic. The chain crosses the membrane as a helical span at residues valine 157–tryptophan 181. Residues histidine 182–arginine 205 lie on the Extracellular side of the membrane. Residues threonine 206–tyrosine 231 traverse the membrane as a helical segment. At arginine 232–lysine 282 the chain is on the cytoplasmic side. Residues threonine 283–aspartate 309 traverse the membrane as a helical segment. At arginine 310 to threonine 326 the chain is on the extracellular side. A helical membrane pass occupies residues phenylalanine 327 to phenylalanine 351. The Cytoplasmic portion of the chain corresponds to arginine 352–histidine 457. Cysteine 361 carries S-palmitoyl cysteine lipidation.

The protein belongs to the G-protein coupled receptor 1 family. As to expression, brain and kidney.

It is found in the cell membrane. Its function is as follows. Dopamine receptor whose activity is mediated by G proteins which activate adenylyl cyclase. The chain is D(1B) dopamine receptor (drd5) from Xenopus laevis (African clawed frog).